We begin with the raw amino-acid sequence, 406 residues long: Argininosuccinate synthase (406 aa).

Residues 11-19 and Ala-38 contribute to the ATP site; that span reads AYSGGLDTS. 2 residues coordinate L-citrulline: Tyr-91 and Ser-96. Gly-121 contacts ATP. The L-aspartate site is built by Thr-123, Asn-127, and Asp-128. Asn-127 is a binding site for L-citrulline. Residues Arg-131, Ser-181, Ser-190, Glu-266, and Tyr-278 each coordinate L-citrulline.

It belongs to the argininosuccinate synthase family. Type 1 subfamily. Homotetramer.

Its subcellular location is the cytoplasm. The catalysed reaction is L-citrulline + L-aspartate + ATP = 2-(N(omega)-L-arginino)succinate + AMP + diphosphate + H(+). It functions in the pathway amino-acid biosynthesis; L-arginine biosynthesis; L-arginine from L-ornithine and carbamoyl phosphate: step 2/3. In Campylobacter lari (strain RM2100 / D67 / ATCC BAA-1060), this protein is Argininosuccinate synthase.